A 158-amino-acid chain; its full sequence is uncharacterized protein (158 aa).

The span at 1-18 (MDLASEITSATQTSSLCS) shows a compositional bias: polar residues. 3 disordered regions span residues 1 to 20 (MDLA…CSSG), 66 to 94 (LRDL…KPCL), and 111 to 158 (GSSG…GEEF). The span at 72-90 (RGSTSSSRSPSRPVSTSAS) shows a compositional bias: low complexity. Polar residues-rich tracts occupy residues 111 to 120 (GSSGHLQSPG) and 149 to 158 (LSHSAQGEEF).

This is an uncharacterized protein from Homo sapiens (Human).